Here is a 536-residue protein sequence, read N- to C-terminus: Caspase recruitment domain-containing protein 9 (536 aa).

At Ser-2 the chain carries Phosphoserine. Residues Asp-3, Cys-10, and His-73 each contribute to the Zn(2+) site. The 93-residue stretch at 6-98 folds into the CARD domain; sequence NDDECWSTLE…QLYRKVTGKE (93 aa). The segment at 99-116 is linker; the sequence is PARVFSMIIDASGESGLT. Residues 117–272 are a coiled coil; it reads QLLMTEVMKL…ELQVSVQEGK (156 aa). A Glycyl lysine isopeptide (Lys-Gly) (interchain with G-Cter in ubiquitin) cross-link involves residue Lys-125. Residue Thr-231 is modified to Phosphothreonine; by PKC/PRKCD. Residue Ser-277 is modified to Phosphoserine. Residues 303-415 adopt a coiled-coil conformation; sequence SLRKDLRQAE…LLAAEGRLKQ (113 aa). Residues Ser-424, Ser-425, Ser-431, Ser-451, Ser-461, Ser-483, and Ser-498 each carry the phosphoserine modification. Residues 425-451 are disordered; sequence SDLEDSSPRNSQELSLPQDLEEDAQLS. Positions 476-536 are disordered; the sequence is LTHGMGPSSS…GSDNTDTEGS (61 aa). The segment covering 487-502 has biased composition (basic and acidic residues); the sequence is PPEKERRRLKESFENY. Residues Thr-531 and Thr-533 each carry the phosphothreonine; by CK2 modification.

As to quaternary structure, monomer. Homodimer; homodimerization is mediated by the CARD domain which forms an extensive interaction with the adjacent linker and coiled-coil regions; leads to an autoinhibited state. Homomultimer; polymerizes following activation, forming a nucleating helical template that seeds BCL10-filament formation via a CARD-CARD interaction. Interacts (via CARD domain) with BCL10 (via CARD domain); interaction takes place following CARD9 activation and polymerization, leading to the formation of a filamentous CBM complex assembly. Component of a CBM complex (CARD9-BCL10, MALT1), composed of CARD9, BCL10 and MALT1. Interacts with RASGRF1. Interacts with NOD2 (via NACHT domain); interaction is direct. Interacts with RIPK2. Interacts with VHL; without leading to protein degradation. Phosphorylated at Thr-231 by PRKCD downstream of C-type lectin receptors activation: phosphorylation promotes interaction with BCL10, followed by activation of NF-kappa-B and MAP kinase p38 pathways. Phosphorylated at Thr-531 and Thr-531 by CK2 following interaction with VHL, leading to inhibit the ability to activate NF-kappa-B. In terms of processing, ubiquitinated at Lys-125 via 'Lys-27'-linked ubiquitin by TRIM62 downstream of C-type lectin receptors activation; leading to CARD9 activation, followed by activation of NF-kappa-B and MAP kinase p38 pathways. Deubiquitinated at Lys-125 by USP15, inhibiting CARD9. Specifically expressed in myeloid cells. Not expressed in non-lymphoid organs.

The protein resides in the cytoplasm. Maintained in an autoinhibited state via homodimerization in which the CARD domain forms an extensive interaction with the adjacent linker and coiled-coil regions. Activation downstream of C-type lectin receptors, by phosphorylation by PRKCD and/or ubiquitination by TRIM62, triggers disruption of the CARD domain-coiled coil interface, CARD9 homooligomerization and BCL10 recruitment, followed by activation of NF-kappa-B and MAP kinase p38 pathways. Zinc-binding inhibits activation by stabilizing the CARD ground-state conformation and restricting its capacity to form BCL10-nucleating filaments. Functionally, adapter protein that plays a key role in innate immune response against fungi by forming signaling complexes downstream of C-type lectin receptors. CARD9-mediated signals are essential for antifungal immunity against a subset of fungi from the phylum Ascomycota. Transduces signals in myeloid cells downstream of C-type lectin receptors CLEC7A (dectin-1), CLEC6A (dectin-2) and CLEC4E (Mincle), which detect pathogen-associated molecular pattern metabolites (PAMPs), such as fungal carbohydrates, and trigger CARD9 activation. Upon activation, CARD9 homooligomerizes to form a nucleating helical template that recruits BCL10 via CARD-CARD interaction, thereby promoting polymerization of BCL10 and subsequent recruitment of MALT1: this leads to activation of NF-kappa-B and MAP kinase p38 (MAPK11, MAPK12, MAPK13 and/or MAPK14) pathways which stimulate expression of genes encoding pro-inflammatory cytokines and chemokines. CARD9 signaling in antigen-presenting cells links innate sensing of fungi to the activation of adaptive immunity and provides a cytokine milieu that induces the development and subsequent of interleukin 17-producing T helper (Th17) cells. Also involved in activation of myeloid cells via classical ITAM-associated receptors and TLR: required for TLR-mediated activation of MAPK, while it is not required for TLR-induced activation of NF-kappa-B. CARD9 can also be engaged independently of BCL10: forms a complex with RASGRF1 downstream of C-type lectin receptors, which recruits and activates HRAS, leading to ERK activation and the production of cytokines. Acts as an important regulator of the intestinal commensal fungi (mycobiota) component of the gut microbiota. Plays an essential role in antifungal immunity against dissemination of gut fungi: acts by promoting induction of antifungal IgG antibodies response in CX3CR1(+) macrophages to confer protection against disseminated C.albicans or C.auris infection. Also mediates immunity against other pathogens, such as certain bacteria, viruses and parasites; CARD9 signaling is however redundant with other innate immune responses. In response to L.monocytogenes infection, required for the production of inflammatory cytokines activated by intracellular peptidoglycan: acts by connecting NOD2 recognition of peptidoglycan to downstream activation of MAP kinases (MAPK) without activating NF-kappa-B. The protein is Caspase recruitment domain-containing protein 9 of Mus musculus (Mouse).